Consider the following 603-residue polypeptide: Probable L-gulonolactone oxidase 6 (603 aa).

An N-terminal signal peptide occupies residues 1-35; it reads MAFTSSPSYGSLNAAFWRTIFVVHCISTLVFTTIS. Positions 64-246 constitute an FAD-binding PCMH-type domain; it reads STCRAANVAY…SQVTLKLQPM (183 aa).

This sequence belongs to the oxygen-dependent FAD-linked oxidoreductase family. FAD is required as a cofactor.

It catalyses the reaction L-gulono-1,4-lactone + O2 = L-ascorbate + H2O2 + H(+). It functions in the pathway cofactor biosynthesis; L-ascorbate biosynthesis. Its function is as follows. May be involved in the biosynthesis of ascorbic acid. This is Probable L-gulonolactone oxidase 6 from Arabidopsis thaliana (Mouse-ear cress).